The primary structure comprises 177 residues: Putative rubredoxin (177 aa).

Positions 1–38 constitute a Rubredoxin-like domain; the sequence is MKICRICGYQIPEGEFNLLEDGWVCPRCGVGKEELQDS. Residues Cys-4, Cys-7, Cys-25, and Cys-28 each contribute to the Fe cation site.

The protein belongs to the rubredoxin family. Requires Fe(3+) as cofactor.

The sequence is that of Putative rubredoxin (rdxA) from Methanothermobacter thermautotrophicus (strain ATCC 29096 / DSM 1053 / JCM 10044 / NBRC 100330 / Delta H) (Methanobacterium thermoautotrophicum).